A 224-amino-acid chain; its full sequence is UPF0758 protein Hhal_2301 (224 aa).

Positions T102–L224 constitute an MPN domain. Residues H173, H175, and D186 each coordinate Zn(2+). A JAMM motif motif is present at residues H173 to D186.

This sequence belongs to the UPF0758 family.

In Halorhodospira halophila (strain DSM 244 / SL1) (Ectothiorhodospira halophila (strain DSM 244 / SL1)), this protein is UPF0758 protein Hhal_2301.